The following is a 476-amino-acid chain: Serine/threonine-protein kinase PknF (476 aa).

Residues 12–279 form the Protein kinase domain; sequence FTIVRQLGSG…FARALGHRLG (268 aa). ATP is bound by residues 18 to 26 and Lys41; that span reads LGSGGMGEV. The active-site Proton acceptor is the Asp137. Residues 306–326 form a helical membrane-spanning segment; the sequence is TAVIVPAVLAMLLVMAVAVAV. The disordered stretch occupies residues 332-376; that stretch reads ADDERAAQPARTRTTTSAGTTTSVAPASTTRPAPTTPTTTGAADT. Residues 338–376 are compositionally biased toward low complexity; the sequence is AQPARTRTTTSAGTTTSVAPASTTRPAPTTPTTTGAADT.

Belongs to the protein kinase superfamily. Ser/Thr protein kinase family. Autophosphorylated. Dephosphorylated by PstP.

Its subcellular location is the cell membrane. It carries out the reaction L-seryl-[protein] + ATP = O-phospho-L-seryl-[protein] + ADP + H(+). The catalysed reaction is L-threonyl-[protein] + ATP = O-phospho-L-threonyl-[protein] + ADP + H(+). Its function is as follows. A serine/threonine-protein kinase, acts on HupB in vitro. The polypeptide is Serine/threonine-protein kinase PknF (Mycobacterium tuberculosis (strain ATCC 25177 / H37Ra)).